A 308-amino-acid chain; its full sequence is Carbonic anhydrase 4 (308 aa).

Positions 1–18 are cleaved as a signal peptide; it reads MQLLFALLALGALRPLAG. Residues 21–281 form the Alpha-carbonic anhydrase domain; sequence LHWCYEIQAS…LGDRSVFKSQ (261 aa). Intrachain disulfides connect cysteine 24-cysteine 34 and cysteine 44-cysteine 225. An N-linked (GlcNAc...) asparagine glycan is attached at asparagine 31. Histidine 86 acts as the Proton donor/acceptor in catalysis. Residues histidine 113, histidine 115, and histidine 138 each contribute to the Zn(2+) site. Residue asparagine 192 is glycosylated (N-linked (GlcNAc...) asparagine). Substrate is bound at residue 221-222; sequence TT. Serine 280 carries the GPI-anchor amidated serine lipid modification. Residues 281–308 constitute a propeptide, removed in mature form; that stretch reads QAAGQLLPLPLPTLLVPTLACVMAGLLR.

Belongs to the alpha-carbonic anhydrase family. Interacts with SLC4A4. It depends on Zn(2+) as a cofactor.

It localises to the cell membrane. The enzyme catalyses hydrogencarbonate + H(+) = CO2 + H2O. Inhibited by acetazolamide. In terms of biological role, catalyzes the reversible hydration of carbon dioxide into bicarbonate and protons and thus is essential to maintaining intracellular and extracellular pH. May stimulate the sodium/bicarbonate transporter activity of SLC4A4 that acts in pH homeostasis. It is essential for acid overload removal from the retina and retina epithelium, and acid release in the choriocapillaris in the choroid. The protein is Carbonic anhydrase 4 (CA4) of Oryctolagus cuniculus (Rabbit).